We begin with the raw amino-acid sequence, 715 residues long: ATP-binding cassette sub-family B member 10, mitochondrial (715 aa).

A mitochondrion-targeting transit peptide spans 1–82; the sequence is MRAPSARALL…SSGARRCWVL (82 aa). At 83 to 133 the chain is on the mitochondrial matrix side; that stretch reads AGPRAAHPLFARLQGAAATGVRDLGNDSQRRPAATGRSEVWKLLGLVRPER. A helical membrane pass occupies residues 134-157; that stretch reads GRLSAAVGFLAVSSVITMSAPFFL. In terms of domain architecture, ABC transmembrane type-1 spans 136–422; sequence LSAAVGFLAV…LSSFYSELMK (287 aa). The Mitochondrial intermembrane portion of the chain corresponds to 158 to 178; sequence GRIIDVIYTNPSEGYGDSLTR. Residues 179–201 traverse the membrane as a helical segment; it reads LCAVLTCVFLCGAAANGIRVYLM. The Mitochondrial matrix segment spans residues 202-252; it reads QSSGQSIVNRLRTSLFSSILRQEVAFFDKTRTGELINRLSSDTALLGRSVT. Lys230 bears the N6-acetyllysine mark. A helical transmembrane segment spans residues 253–275; that stretch reads ENLSDGLRAGAQASVGVGMMFFV. The Mitochondrial intermembrane portion of the chain corresponds to 276–278; it reads SPS. The helical transmembrane segment at 279 to 298 threads the bilayer; sequence LATFVLSVVPPISVLAVIYG. Residues 299 to 357 lie on the Mitochondrial matrix side of the membrane; the sequence is RYLRKLSKATQDSLAEATQLAEERIGNIRTIRAFGKEMTEVEKYTGRVDQLLQLAQKEA. The helical transmembrane segment at 358-381 threads the bilayer; it reads LARAGFFGAAGLSGNLIVLSVLYK. Topologically, residues 382-395 are mitochondrial intermembrane; sequence GGLLMGSAHMTVGE. The chain crosses the membrane as a helical span at residues 396-417; the sequence is LSSFLMYAFWVGLSIGGLSSFY. The Mitochondrial matrix segment spans residues 418–715; that stretch reads SELMKGLGAG…AEQFLEPARA (298 aa). The 240-residue stretch at 457-696 folds into the ABC transporter domain; the sequence is LEFRNVHFTY…PNGLYRKLMN (240 aa). ATP contacts are provided by Gly495, Gly497, Lys498, Ser499, and Thr500. Residue Ser499 coordinates Mg(2+). S-glutathionyl cysteine is present on Cys547. Asp623 is a binding site for Mg(2+).

The protein belongs to the ABC transporter superfamily. ABCB family. Mitochondrial peptide exporter (TC 3.A.1.212) subfamily. Homodimer or homooligomer. Interacts with PAAT; this interaction regulates ABCB10. Interacts with SLC25A37; this interaction stabilizes SLC25A37 and enhances the function of SLC25A37 to import mitochondrial iron during erythroid differentiation. Interacts with FECH; this interaction may allow the formation of the oligomeric complex with SLC25A37. Forms a complex with ABCB7 and FECH, where a dimeric FECH bridges ABCB7 and ABCB10 homodimers; this complex may be required for cellular iron homeostasis, mitochondrial function and heme biosynthesis. As to expression, expressed at particularly high levels in fetal liver, and erythroid tissues of embryos and adults. Found also in adult bone marrow, liver and kidney, and at lower levels in heart, brain and spleen.

The protein localises to the mitochondrion inner membrane. It carries out the reaction biliverdin IXalpha(in) + ATP + H2O = biliverdin IXalpha(out) + ADP + phosphate + H(+). Its activity is regulated as follows. Oxidized glutathione (GSSG) stimulates ATP hydrolysis without affecting ATP binding, whereas reduced glutathione (GSH) inhibits ATP binding and hydrolysis. Its function is as follows. ATP-dependent transporter located in the mitochondrial inner membrane that catalyzes the export of biliverdin from the mitochondrial matrix, and plays a crucial role in hemoglobin synthesis and antioxidative stress. Participates in the early step of the heme biosynthetic process during insertion of iron into protoporphyrin IX (PPIX). Involved in the stabilization of the iron transporter mitoferrin-1/SLC25A37. In addition may be involved in mitochondrial unfolded protein response (UPRmt) signaling pathway, although ABCB10 probably does not participate in peptide export from mitochondria. In Mus musculus (Mouse), this protein is ATP-binding cassette sub-family B member 10, mitochondrial.